Here is a 612-residue protein sequence, read N- to C-terminus: Threonine--tRNA ligase (612 aa).

Residues 218-509 are catalytic; that stretch reads NHRKLGVELG…LSEHFGGNFP (292 aa). Zn(2+)-binding residues include C310, H361, and H486.

The protein belongs to the class-II aminoacyl-tRNA synthetase family. Homodimer. Zn(2+) is required as a cofactor.

It is found in the cytoplasm. It carries out the reaction tRNA(Thr) + L-threonine + ATP = L-threonyl-tRNA(Thr) + AMP + diphosphate + H(+). Catalyzes the attachment of threonine to tRNA(Thr) in a two-step reaction: L-threonine is first activated by ATP to form Thr-AMP and then transferred to the acceptor end of tRNA(Thr). Also edits incorrectly charged L-seryl-tRNA(Thr). This Helicobacter pylori (strain Shi470) protein is Threonine--tRNA ligase.